A 492-amino-acid chain; its full sequence is N-succinylglutamate 5-semialdehyde dehydrogenase (492 aa).

220-225 (GSASTG) provides a ligand contact to NAD(+). Residues glutamate 243 and cysteine 277 contribute to the active site.

The protein belongs to the aldehyde dehydrogenase family. AstD subfamily.

The enzyme catalyses N-succinyl-L-glutamate 5-semialdehyde + NAD(+) + H2O = N-succinyl-L-glutamate + NADH + 2 H(+). Its pathway is amino-acid degradation; L-arginine degradation via AST pathway; L-glutamate and succinate from L-arginine: step 4/5. Functionally, catalyzes the NAD-dependent reduction of succinylglutamate semialdehyde into succinylglutamate. This is N-succinylglutamate 5-semialdehyde dehydrogenase from Salmonella typhimurium (strain LT2 / SGSC1412 / ATCC 700720).